The sequence spans 421 residues: Testin (421 aa).

The region spanning 92–199 (MILTNPVAAK…GDVKLPREMN (108 aa)) is the PET domain. A disordered region spans residues 133–164 (EKQPVAGSEGAQYRKKQLAKQLPAHDQDPSKC). A compositionally biased stretch (basic and acidic residues) spans 155 to 164 (PAHDQDPSKC). LIM zinc-binding domains are found at residues 234-297 (YSCY…CDSE), 299-359 (PRCA…NHAV), and 362-421 (QGCH…KMMS).

It belongs to the prickle / espinas / testin family. In terms of assembly, interacts via LIM domain 1 with ZYX. Interacts (via LIM domain 3) with ENAH and VASP. Interacts with ALKBH4, talin, actin, alpha-actinin, GRIP1 and PXN. Interacts (via LIM domain 2) with ACTL7A (via N-terminus). Heterodimer with ACTL7A; the heterodimer interacts with ENAH to form a heterotrimer.

The protein localises to the cytoplasm. The protein resides in the cell junction. Its subcellular location is the focal adhesion. Scaffold protein that may play a role in cell adhesion, cell spreading and in the reorganization of the actin cytoskeleton. Plays a role in the regulation of cell proliferation. May act as a tumor suppressor. This is Testin (TES) from Sus scrofa (Pig).